Here is a 634-residue protein sequence, read N- to C-terminus: MWLQQRLKGLPGLLSSSWARRLLCLLGLLVLLLWFAGSGARRAAGGLQLLPWPHGEPGAAEPSACLEAATHAWRSLRERGEAVLLGPGVPSLVANGFLALDVVANRLWVTPGEREPAVAPDFVPFVQLRPLSALPEAGESVLLLREGLLRRVRCLQLGTSGPGPAAAGPGPASASGLLTGSGRDCVLLQEDFLAHRGRPHVYLQRIQLNNPTERVAALQTVGPTAGPAPRAFTSTLEKVGDHQFLLYSGRSPPVPTGLVHLVVVAAKKLVDRLQVAPRTQLDETVLWVVHVSGPLNPQVLKSKAAKELKVLQDLARKEMLELLEMPAAELLQDHQRLWAQLFSPGVEMKKITDAHTPSGLTVNLTLYYMLSCSPAPLLSPDLSHRERDQMESTLNYEDHCFSGHATMHAENLWPGRLSSVQQILQLWDLWRLTLQKRGCKGLVRAGAPGILQGMVLSFGGLQFTENHLQFQADPDVLHNSYALHGIRYKNDHINLAVLADAEGKPYLHVSVESRGQLVKIYACEAGCLDEPVELTSAPQGHTFSVMVTQPITPLLYISTDLTHLQDLRHTLHLKAILAHDEHMAQQDPGLPFLFWFSVASLITLFHLFLFKLIYNEYCGPGAKPFFRNKEDPSV.

Positions 1–40 (MWLQQRLKGLPGLLSSSWARRLLCLLGLLVLLLWFAGSGA) are cleaved as a signal peptide. Residues 41–589 (RRAAGGLQLL…DEHMAQQDPG (549 aa)) lie on the Extracellular side of the membrane. Asparagine 363 is a glycosylation site (N-linked (GlcNAc...) asparagine). A helical transmembrane segment spans residues 590-610 (LPFLFWFSVASLITLFHLFLF). Topologically, residues 611 to 634 (KLIYNEYCGPGAKPFFRNKEDPSV) are cytoplasmic.

It is found in the membrane. This is an uncharacterized protein from Bos taurus (Bovine).